Reading from the N-terminus, the 255-residue chain is Triosephosphate isomerase (255 aa).

Substrate is bound at residue 9-11 (NWK). Histidine 95 serves as the catalytic Electrophile. Catalysis depends on glutamate 167, which acts as the Proton acceptor. Substrate is bound by residues glycine 173, serine 212, and 233–234 (GG).

The protein belongs to the triosephosphate isomerase family. As to quaternary structure, homodimer.

Its subcellular location is the cytoplasm. The catalysed reaction is D-glyceraldehyde 3-phosphate = dihydroxyacetone phosphate. The protein operates within carbohydrate biosynthesis; gluconeogenesis. It functions in the pathway carbohydrate degradation; glycolysis; D-glyceraldehyde 3-phosphate from glycerone phosphate: step 1/1. Functionally, involved in the gluconeogenesis. Catalyzes stereospecifically the conversion of dihydroxyacetone phosphate (DHAP) to D-glyceraldehyde-3-phosphate (G3P). The protein is Triosephosphate isomerase of Photorhabdus laumondii subsp. laumondii (strain DSM 15139 / CIP 105565 / TT01) (Photorhabdus luminescens subsp. laumondii).